Here is a 313-residue protein sequence, read N- to C-terminus: Ribosomal protein L11 methyltransferase (313 aa).

Residues Thr164, Gly185, Asp207, and Asn249 each coordinate S-adenosyl-L-methionine.

The protein belongs to the methyltransferase superfamily. PrmA family.

The protein localises to the cytoplasm. It carries out the reaction L-lysyl-[protein] + 3 S-adenosyl-L-methionine = N(6),N(6),N(6)-trimethyl-L-lysyl-[protein] + 3 S-adenosyl-L-homocysteine + 3 H(+). Its function is as follows. Methylates ribosomal protein L11. In Clostridium botulinum (strain Alaska E43 / Type E3), this protein is Ribosomal protein L11 methyltransferase.